Reading from the N-terminus, the 553-residue chain is Zinc finger matrin-type protein 1 (553 aa).

The segment at 16 to 36 (TPSSPAATCSGPMAGGDTSSN) is disordered. 4 Matrin-type zinc fingers span residues 61 to 91 (TFCK…KVRL), 125 to 155 (KFCG…KMRQ), 223 to 253 (KYCK…NQAR), and 275 to 305 (YVCP…KESM). Disordered stretches follow at residues 341–402 (QFRQ…DQRV) and 428–553 (HISR…ILGF). Acidic residues predominate over residues 350 to 362 (DSCDYEEEEEQEP). Residues 431-453 (RSPTSQDSSDNSSGSSSDESSGS) show a composition bias toward low complexity. Residues 456-476 (KDKRRKRKHHRESRLRGSGRI) are compositionally biased toward basic residues. Positions 477-513 (RRGDENSEKRKRKGEDADSGKEDNKHDRGKTSGGDKD) are enriched in basic and acidic residues.

It is found in the nucleus. This is Zinc finger matrin-type protein 1 (zmat1) from Xenopus tropicalis (Western clawed frog).